The primary structure comprises 495 residues: Membrane-bound lytic murein transglycosylase F (495 aa).

The first 30 residues, 1–30 (MSRIRHHRFIQSCLVISTLLITLTGCQVES), serve as a signal peptide directing secretion. Residues 31 to 270 (EPKTKLEQIR…LLEEKYFGHV (240 aa)) form a non-LT domain region. Residues 272–495 (SFDYVDTRAF…SVSQAIETKK (224 aa)) form an LT domain region. E315 is a catalytic residue.

This sequence in the N-terminal section; belongs to the bacterial solute-binding protein 3 family. In the C-terminal section; belongs to the transglycosylase Slt family.

It is found in the cell outer membrane. It carries out the reaction Exolytic cleavage of the (1-&gt;4)-beta-glycosidic linkage between N-acetylmuramic acid (MurNAc) and N-acetylglucosamine (GlcNAc) residues in peptidoglycan, from either the reducing or the non-reducing ends of the peptidoglycan chains, with concomitant formation of a 1,6-anhydrobond in the MurNAc residue.. In terms of biological role, murein-degrading enzyme that degrades murein glycan strands and insoluble, high-molecular weight murein sacculi, with the concomitant formation of a 1,6-anhydromuramoyl product. Lytic transglycosylases (LTs) play an integral role in the metabolism of the peptidoglycan (PG) sacculus. Their lytic action creates space within the PG sacculus to allow for its expansion as well as for the insertion of various structures such as secretion systems and flagella. This chain is Membrane-bound lytic murein transglycosylase F, found in Aliivibrio fischeri (strain ATCC 700601 / ES114) (Vibrio fischeri).